Reading from the N-terminus, the 266-residue chain is Undecaprenyl-diphosphatase (266 aa).

Helical transmembrane passes span 1–21 (MDFLKFIFYGIIQGLTEFIPV), 39–59 (PGSSLSAIIQIGSVLAIFWYF), 86–106 (SIFIGTIPIVLIGGIVKLFVT), 117–137 (FSIAVVSILMSLIMFLADIST), 153–173 (FIGISQAFAIIPGVSRSGATI), 190–210 (SFLLGIPSISLAAFVEFITSI), 216–236 (FPFLPLFVGLITTFFSSLLAI), and 246–266 (NGLKIFIYYRLVFGILIILNL).

Belongs to the UppP family.

It is found in the cell inner membrane. It carries out the reaction di-trans,octa-cis-undecaprenyl diphosphate + H2O = di-trans,octa-cis-undecaprenyl phosphate + phosphate + H(+). Its function is as follows. Catalyzes the dephosphorylation of undecaprenyl diphosphate (UPP). Confers resistance to bacitracin. The polypeptide is Undecaprenyl-diphosphatase (Prochlorococcus marinus (strain MIT 9515)).